The primary structure comprises 892 residues: Translation initiation factor IF-2 (892 aa).

A disordered region spans residues 88–304 (KKRTFVKRDP…SSLQQGFQKP (217 aa)). Composition is skewed to basic and acidic residues over residues 93 to 159 (VKRD…KDKV) and 166 to 216 (DMTK…EENK). Over residues 254–269 (GRGRNAKAARPAKKGK) the composition is skewed to basic residues. Residues 270–282 (HAESKADREEARA) are compositionally biased toward basic and acidic residues. Residues 391 to 560 (PRAPVVTIMG…LLQAEVLELK (170 aa)) enclose the tr-type G domain. Residues 400–407 (GHVDHGKT) are G1. GTP is bound at residue 400 to 407 (GHVDHGKT). Residues 425–429 (GITQH) form a G2 region. The segment at 446–449 (DTPG) is G3. GTP contacts are provided by residues 446-450 (DTPGH) and 500-503 (NKID). Residues 500–503 (NKID) form a G4 region. A G5 region spans residues 536–538 (SAK).

Belongs to the TRAFAC class translation factor GTPase superfamily. Classic translation factor GTPase family. IF-2 subfamily.

The protein localises to the cytoplasm. Functionally, one of the essential components for the initiation of protein synthesis. Protects formylmethionyl-tRNA from spontaneous hydrolysis and promotes its binding to the 30S ribosomal subunits. Also involved in the hydrolysis of GTP during the formation of the 70S ribosomal complex. The sequence is that of Translation initiation factor IF-2 from Salmonella choleraesuis (strain SC-B67).